The chain runs to 329 residues: 4-hydroxythreonine-4-phosphate dehydrogenase (329 aa).

Substrate-binding residues include His136 and Thr137. Residues His166, His211, and His266 each coordinate a divalent metal cation. 3 residues coordinate substrate: Lys274, Asn283, and Arg292.

The protein belongs to the PdxA family. Homodimer. Zn(2+) serves as cofactor. The cofactor is Mg(2+). Requires Co(2+) as cofactor.

Its subcellular location is the cytoplasm. It carries out the reaction 4-(phosphooxy)-L-threonine + NAD(+) = 3-amino-2-oxopropyl phosphate + CO2 + NADH. Its pathway is cofactor biosynthesis; pyridoxine 5'-phosphate biosynthesis; pyridoxine 5'-phosphate from D-erythrose 4-phosphate: step 4/5. Its function is as follows. Catalyzes the NAD(P)-dependent oxidation of 4-(phosphooxy)-L-threonine (HTP) into 2-amino-3-oxo-4-(phosphooxy)butyric acid which spontaneously decarboxylates to form 3-amino-2-oxopropyl phosphate (AHAP). The polypeptide is 4-hydroxythreonine-4-phosphate dehydrogenase (Salmonella typhimurium (strain LT2 / SGSC1412 / ATCC 700720)).